Here is a 154-residue protein sequence, read N- to C-terminus: 6,7-dimethyl-8-ribityllumazine synthase (154 aa).

5-amino-6-(D-ribitylamino)uracil contacts are provided by residues F22, 56–58, and 80–82; these read AFE and AVI. 85–86 contributes to the (2S)-2-hydroxy-3-oxobutyl phosphate binding site; the sequence is AT. H88 acts as the Proton donor in catalysis. F113 provides a ligand contact to 5-amino-6-(D-ribitylamino)uracil. Position 127 (R127) interacts with (2S)-2-hydroxy-3-oxobutyl phosphate.

This sequence belongs to the DMRL synthase family. In terms of assembly, forms an icosahedral capsid composed of 60 subunits, arranged as a dodecamer of pentamers.

The enzyme catalyses (2S)-2-hydroxy-3-oxobutyl phosphate + 5-amino-6-(D-ribitylamino)uracil = 6,7-dimethyl-8-(1-D-ribityl)lumazine + phosphate + 2 H2O + H(+). It functions in the pathway cofactor biosynthesis; riboflavin biosynthesis; riboflavin from 2-hydroxy-3-oxobutyl phosphate and 5-amino-6-(D-ribitylamino)uracil: step 1/2. In terms of biological role, catalyzes the formation of 6,7-dimethyl-8-ribityllumazine by condensation of 5-amino-6-(D-ribitylamino)uracil with 3,4-dihydroxy-2-butanone 4-phosphate. This is the penultimate step in the biosynthesis of riboflavin. The sequence is that of 6,7-dimethyl-8-ribityllumazine synthase from Anoxybacillus flavithermus (strain DSM 21510 / WK1).